The following is a 327-amino-acid chain: Glutamyl endopeptidase (327 aa).

An N-terminal signal peptide occupies residues 1 to 29 (MKGKFLKVSSLFVATLTTATLVSSPAANA). The propeptide occupies 30–68 (LSSKAMDNHPQQSQSSKQQTPKIQKGGNLKPLEQREHAN). Residues 33–61 (KAMDNHPQQSQSSKQQTPKIQKGGNLKPL) are disordered. Over residues 40-54 (QQSQSSKQQTPKIQK) the composition is skewed to low complexity. Residues histidine 119, aspartate 161, and serine 237 each act as charge relay system in the active site. The interval 283–327 (FANDDQPNNPDNPDNPNNPDNPNNPNNPDNPDNGDNNNSDNPDAA) is disordered. A compositionally biased stretch (low complexity) spans 286 to 327 (DDQPNNPDNPDNPNNPDNPNNPNNPDNPDNGDNNNSDNPDAA). Tandem repeats lie at residues 289–291 (PNN), 292–294 (PDN), 295–297 (PDN), 298–300 (PNN), 301–303 (PDN), 304–306 (PNN), 307–309 (PNN), 310–312 (PDN), and 313–315 (PDN). The segment at 289–315 (PNNPDNPDNPNNPDNPNNPNNPDNPDN) is 9 X 3 AA repeats of P-[DN]-N.

Belongs to the peptidase S1B family. In terms of processing, proteolytically cleaved by aureolysin (aur). This cleavage leads to the activation of SspA.

It localises to the secreted. It catalyses the reaction Preferential cleavage: Glu-|-Xaa, Asp-|-Xaa.. Its function is as follows. Preferentially cleaves peptide bonds on the carboxyl-terminal side of aspartate and glutamate. Along with other extracellular proteases it is involved in colonization and infection of human tissues. Required for proteolytic maturation of thiol protease SspB and inactivation of SspC, an inhibitor of SspB. It is the most important protease for degradation of fibronectin-binding protein (FnBP) and surface protein A, which are involved in adherence to host cells. May also protect bacteria against host defense mechanism by cleaving the immunoglobulin classes IgG, IgA and IgM. May be involved in the stability of secreted lipases. The polypeptide is Glutamyl endopeptidase (sspA) (Staphylococcus aureus (strain MW2)).